A 217-amino-acid chain; its full sequence is Proteasome subunit beta type-9 (217 aa).

The propeptide at 1 to 18 (MLDESLEPGWLSEEVKTG) is removed in mature form. Thr19 functions as the Nucleophile in the catalytic mechanism.

It belongs to the peptidase T1B family. As to quaternary structure, the 26S proteasome consists of a 20S proteasome core and two 19S regulatory subunits. The 20S proteasome core is composed of 28 subunits that are arranged in four stacked rings, resulting in a barrel-shaped structure. The two end rings are each formed by seven alpha subunits, and the two central rings are each formed by seven beta subunits. The catalytic chamber with the active sites is on the inside of the barrel. Component of the immunoproteasome, where it displaces the equivalent housekeeping subunit PSMB6. In terms of processing, autocleaved. The resulting N-terminal Thr residue of the mature subunit is responsible for the nucleophile proteolytic activity.

It is found in the cytoplasm. It localises to the nucleus. It catalyses the reaction Cleavage of peptide bonds with very broad specificity.. Its function is as follows. The proteasome is a multicatalytic proteinase complex which is characterized by its ability to cleave peptides with Arg, Phe, Tyr, Leu, and Glu adjacent to the leaving group at neutral or slightly basic pH. The proteasome has an ATP-dependent proteolytic activity. This subunit is involved in antigen processing to generate class I binding peptides. In Oncorhynchus mykiss (Rainbow trout), this protein is Proteasome subunit beta type-9 (psmb9).